The sequence spans 331 residues: Cytosolic Fe-S cluster assembly factor NBP35 (331 aa).

The span at 1–10 shows a compositional bias: polar residues; that stretch reads MSPSQTQIEK. A disordered region spans residues 1-32; sequence MSPSQTQIEKSQLAAPEPEHCPGPESELAGQG. 4 residues coordinate [4Fe-4S] cluster: Cys21, Cys35, Cys38, and Cys44. Residue 75-82 participates in ATP binding; it reads GKGGVGKS. Cys249 and Cys252 together coordinate [4Fe-4S] cluster.

Belongs to the Mrp/NBP35 ATP-binding proteins family. NUBP1/NBP35 subfamily. As to quaternary structure, heterotetramer of 2 NBP35 and 2 CFD1 chains. Requires [4Fe-4S] cluster as cofactor.

The protein localises to the cytoplasm. It is found in the nucleus. Its function is as follows. Component of the cytosolic iron-sulfur (Fe/S) protein assembly (CIA) machinery. Required for maturation of extramitochondrial Fe-S proteins. The NBP35-CFD1 heterotetramer forms a Fe-S scaffold complex, mediating the de novo assembly of an Fe-S cluster and its transfer to target apoproteins. Required for biogenesis and export of both ribosomal subunits, which may reflect a role in assembly of the Fe/S clusters in RLI1, a protein which performs rRNA processing and ribosome export. This chain is Cytosolic Fe-S cluster assembly factor NBP35, found in Candida albicans (strain SC5314 / ATCC MYA-2876) (Yeast).